We begin with the raw amino-acid sequence, 218 residues long: Pyridoxine/pyridoxamine 5'-phosphate oxidase (218 aa).

Substrate-binding positions include 14–17 and lysine 72; that span reads RREY. Residues 67–72, 82–83, arginine 88, lysine 89, and glutamine 111 contribute to the FMN site; these read RIVLLK and YT. Residues tyrosine 129, arginine 133, and serine 137 each coordinate substrate. Residues 146–147 and tryptophan 191 each bind FMN; that span reads QS. 197 to 199 is a binding site for substrate; the sequence is RLH. An FMN-binding site is contributed by arginine 201.

It belongs to the pyridoxamine 5'-phosphate oxidase family. As to quaternary structure, homodimer. FMN is required as a cofactor.

It carries out the reaction pyridoxamine 5'-phosphate + O2 + H2O = pyridoxal 5'-phosphate + H2O2 + NH4(+). The enzyme catalyses pyridoxine 5'-phosphate + O2 = pyridoxal 5'-phosphate + H2O2. The protein operates within cofactor metabolism; pyridoxal 5'-phosphate salvage; pyridoxal 5'-phosphate from pyridoxamine 5'-phosphate: step 1/1. It functions in the pathway cofactor metabolism; pyridoxal 5'-phosphate salvage; pyridoxal 5'-phosphate from pyridoxine 5'-phosphate: step 1/1. Catalyzes the oxidation of either pyridoxine 5'-phosphate (PNP) or pyridoxamine 5'-phosphate (PMP) into pyridoxal 5'-phosphate (PLP). The protein is Pyridoxine/pyridoxamine 5'-phosphate oxidase of Escherichia coli O157:H7.